A 490-amino-acid polypeptide reads, in one-letter code: Glutamate--tRNA ligase (490 aa).

The short motif at 9–19 (PSPTGLQHIGG) is the 'HIGH' region element. A 'KMSKS' region motif is present at residues 251-255 (KLSKR). Lys-254 provides a ligand contact to ATP.

The protein belongs to the class-I aminoacyl-tRNA synthetase family. Glutamate--tRNA ligase type 1 subfamily. As to quaternary structure, monomer.

Its subcellular location is the cytoplasm. The enzyme catalyses tRNA(Glu) + L-glutamate + ATP = L-glutamyl-tRNA(Glu) + AMP + diphosphate. Functionally, catalyzes the attachment of glutamate to tRNA(Glu) in a two-step reaction: glutamate is first activated by ATP to form Glu-AMP and then transferred to the acceptor end of tRNA(Glu). This Borreliella burgdorferi (strain ATCC 35210 / DSM 4680 / CIP 102532 / B31) (Borrelia burgdorferi) protein is Glutamate--tRNA ligase.